The primary structure comprises 347 residues: Putative histone PARylation factor 1-like (347 aa).

M1 is modified (N-acetylmethionine). N6-acetyllysine occurs at positions 187 and 234.

The protein belongs to the HPF1 family.

This Homo sapiens (Human) protein is Putative histone PARylation factor 1-like.